Consider the following 43-residue polypeptide: S-layer protein 1 (43 aa).

The protein resides in the secreted. Its subcellular location is the cell wall. It localises to the S-layer. In terms of biological role, the S-layer is a paracrystalline mono-layered assembly of proteins which coat the surface of bacteria. The chain is S-layer protein 1 from Bacillus thuringiensis subsp. konkukian.